Here is an 81-residue protein sequence, read N- to C-terminus: uncharacterized protein (81 aa).

This is an uncharacterized protein from Carnobacterium maltaromaticum (Carnobacterium piscicola).